A 274-amino-acid chain; its full sequence is MGTDSRAAGALLARASTLHLQTGNLLNWGRLRKKCPSTHSEELRDCIQKTLNEWSSQISPDLVREFPDVLECTMSHAVEKINPDEREEMKVSAKLFIVGSNSSSSTRNAVDMACSVLGVAQLDSVIMASPPIEDGVNLSLEHLQPYWEELENLVQSKKIVAIGTSDLDKTQLEQLYQWAQVKPNSNQVNLASCCVMPPDLTAFAKQFDIQLLTHNDPKELLSEASFQEALQESIPDIEAQEWVPLWLLRYSVIVKSRGIIKSKGYILQAKRKGS.

Residue serine 59 is modified to Phosphoserine. N6-acetyllysine is present on lysine 263.

Belongs to the aldo/keto reductase family. Glutamate--cysteine ligase light chain subfamily. Heterodimer of a catalytic heavy chain and a regulatory light chain. Most abundant in kidney. Also found in liver and testis.

Its pathway is sulfur metabolism; glutathione biosynthesis; glutathione from L-cysteine and L-glutamate: step 1/2. The protein is Glutamate--cysteine ligase regulatory subunit (Gclm) of Rattus norvegicus (Rat).